Consider the following 134-residue polypeptide: Phosphoribosyl-AMP cyclohydrolase (134 aa).

A Mg(2+)-binding site is contributed by Asp80. Cys81 is a binding site for Zn(2+). Mg(2+)-binding residues include Asp82 and Asp84. 2 residues coordinate Zn(2+): Cys98 and Cys105.

Belongs to the PRA-CH family. In terms of assembly, homodimer. Mg(2+) serves as cofactor. Requires Zn(2+) as cofactor.

The protein resides in the cytoplasm. It carries out the reaction 1-(5-phospho-beta-D-ribosyl)-5'-AMP + H2O = 1-(5-phospho-beta-D-ribosyl)-5-[(5-phospho-beta-D-ribosylamino)methylideneamino]imidazole-4-carboxamide. Its pathway is amino-acid biosynthesis; L-histidine biosynthesis; L-histidine from 5-phospho-alpha-D-ribose 1-diphosphate: step 3/9. In terms of biological role, catalyzes the hydrolysis of the adenine ring of phosphoribosyl-AMP. In Bordetella avium (strain 197N), this protein is Phosphoribosyl-AMP cyclohydrolase.